Consider the following 307-residue polypeptide: Zinc-alpha-2-glycoprotein (307 aa).

An N-terminal signal peptide occupies residues 1–17 (MVPVLLSLPLLLGPAVF). Gln18 carries the post-translational modification Pyrrolidone carboxylic acid. Cys118 and Cys181 are disulfide-bonded. N-linked (GlcNAc...) asparagine glycans are attached at residues Asn123, Asn190, and Asn254. One can recognise an Ig-like C1-type domain in the interval 202–287 (PTVTITSRVI…DHRGFSQSLS (86 aa)). Cys220 and Cys275 form a disulfide bridge.

The protein belongs to the MHC class I family. In terms of assembly, interacts with PIP.

It localises to the secreted. Functionally, stimulates lipid degradation in adipocytes and causes the extensive fat losses associated with some advanced cancers. This is Zinc-alpha-2-glycoprotein (Azgp1) from Mus musculus (Mouse).